The following is a 753-amino-acid chain: Polyribonucleotide nucleotidyltransferase (753 aa).

Mg(2+) is bound by residues Asp523 and Asp529. Residues 589–648 form the KH domain; the sequence is PRIISVRIPVDKIGAVIGPKGAMINQIQDDTGADITIEDDGTVLIGATDGASAEAARSAV. Residues 660-732 form the S1 motif domain; the sequence is GERYLGTVVK…DRGKLSLSPV (73 aa). Residues 733 to 753 are disordered; the sequence is GAESDAVAETADAIESSQTEA.

It belongs to the polyribonucleotide nucleotidyltransferase family. Requires Mg(2+) as cofactor.

It is found in the cytoplasm. It carries out the reaction RNA(n+1) + phosphate = RNA(n) + a ribonucleoside 5'-diphosphate. Involved in mRNA degradation. Catalyzes the phosphorolysis of single-stranded polyribonucleotides processively in the 3'- to 5'-direction. The protein is Polyribonucleotide nucleotidyltransferase of Micrococcus luteus (strain ATCC 4698 / DSM 20030 / JCM 1464 / CCM 169 / CCUG 5858 / IAM 1056 / NBRC 3333 / NCIMB 9278 / NCTC 2665 / VKM Ac-2230) (Micrococcus lysodeikticus).